The chain runs to 217 residues: CXXC-type zinc finger protein 4 (217 aa).

A disordered region spans residues 1–20 (MHRNDSQRLGKPGGAPESLQ). The segment at 122-163 (AKKKRKRCGVCVPCKRLINCGVCSSCRNRKTGHQICKFRKCE) adopts a CXXC-type zinc-finger fold. Zn(2+) contacts are provided by C129, C132, C135, C141, C144, C147, C157, and C162.

It localises to the cytoplasm. Functionally, acts as a negative regulator of the Wnt signaling pathway required for anterior neural structure formation. Ectopic expression induces ventralization. Binds preferentially to DNA containing cytidine-phosphate-guanosine (CpG) dinucleotides over CpH (H=A, T, and C), hemimethylated-CpG and hemimethylated-hydroxymethyl-CpG. This Xenopus laevis (African clawed frog) protein is CXXC-type zinc finger protein 4 (cxxc4).